A 91-amino-acid polypeptide reads, in one-letter code: Small ribosomal subunit protein uS15 (91 aa).

Belongs to the universal ribosomal protein uS15 family. Part of the 30S ribosomal subunit. Forms a bridge to the 50S subunit in the 70S ribosome, contacting the 23S rRNA.

Functionally, one of the primary rRNA binding proteins, it binds directly to 16S rRNA where it helps nucleate assembly of the platform of the 30S subunit by binding and bridging several RNA helices of the 16S rRNA. In terms of biological role, forms an intersubunit bridge (bridge B4) with the 23S rRNA of the 50S subunit in the ribosome. This is Small ribosomal subunit protein uS15 from Synechococcus sp. (strain JA-2-3B'a(2-13)) (Cyanobacteria bacterium Yellowstone B-Prime).